Here is a 221-residue protein sequence, read N- to C-terminus: GTP-binding nuclear protein Ran-1 (221 aa).

The Small GTPase Ran-type domain maps to 10–174; that stretch reads DYPSFKLVIV…LYLARKLAGD (165 aa). Position 21-28 (21-28) interacts with GTP; it reads DGGTGKTT. Residues 40 to 48 form a switch-I region; the sequence is KKYEPTIGV. Residues Gly-71, 125 to 128, and 153 to 155 contribute to the GTP site; these read NKVD and SAK. The tract at residues 71–87 is switch-II; the sequence is GQEKFGGLRDGYYIHGQ.

The protein belongs to the small GTPase superfamily. Ran family. Found in a nuclear export complex with RanGTP, exportin and pre-miRNA.

It localises to the nucleus. Its function is as follows. GTP-binding protein involved in nucleocytoplasmic transport. Required for the import of protein into the nucleus and also for RNA export. Involved in chromatin condensation and control of cell cycle. In Oryza sativa subsp. indica (Rice), this protein is GTP-binding nuclear protein Ran-1 (RAN1).